The sequence spans 138 residues: ATP synthase epsilon chain, chloroplastic (138 aa).

It belongs to the ATPase epsilon chain family. F-type ATPases have 2 components, CF(1) - the catalytic core - and CF(0) - the membrane proton channel. CF(1) has five subunits: alpha(3), beta(3), gamma(1), delta(1), epsilon(1). CF(0) has three main subunits: a, b and c.

It localises to the plastid. It is found in the chloroplast thylakoid membrane. Produces ATP from ADP in the presence of a proton gradient across the membrane. The chain is ATP synthase epsilon chain, chloroplastic from Huperzia lucidula (Shining clubmoss).